The following is a 319-amino-acid chain: Free fatty acid receptor 3 (319 aa).

Topologically, residues 1–15 are extracellular; the sequence is MDTSFFPGNHWLFFS. Residues 16-36 form a helical membrane-spanning segment; that stretch reads VDLLVFLVGLPLNVMALVVFV. At 37 to 43 the chain is on the cytoplasmic side; that stretch reads NKLRRRP. The helical transmembrane segment at 44 to 64 threads the bilayer; that stretch reads VAVDLLLLNLTISDLLLLLFL. The Extracellular portion of the chain corresponds to 65 to 98; that stretch reads PFRIVEAACGMKWILPFIFCPLSGFLFFTTIYLT. An intrachain disulfide couples Cys-84 to Cys-165. The helical transmembrane segment at 99-119 threads the bilayer; sequence SLFLMTVSIERFLSVAYPLWY. Residues 120–127 lie on the Cytoplasmic side of the membrane; it reads KTRPRLAQ. The chain crosses the membrane as a helical span at residues 128–148; sequence AGLVSGICWFLASAHCSVIYV. The Extracellular segment spans residues 149-183; sequence TEYWGNATYSQGTNGTCYLEFREDQLAILLPVRLE. A helical membrane pass occupies residues 184-206; it reads MAVVLFMVPLCITSYCYSRLVWI. Over 207 to 218 the chain is Cytoplasmic; that stretch reads LSQGASRRRRKR. Residues 219 to 239 form a helical membrane-spanning segment; it reads VMGLLVATLLIFFVCFGPYNM. Residues 240–254 lie on the Extracellular side of the membrane; sequence SHVVGYVRGESPTWR. Residues 255–275 traverse the membrane as a helical segment; that stretch reads SYVLLLSTLNSCIDPLVFYFS. Topologically, residues 276–319 are cytoplasmic; the sequence is SSKFQADFHQLLSRLIRACVPWTQEVSLELKVKNGEEPSKECPS.

This sequence belongs to the G-protein coupled receptor 1 family. Expressed in the sympathetic nervous system.

Its subcellular location is the cell membrane. Functionally, g protein-coupled receptor that is activated by a major product of dietary fiber digestion, the short chain fatty acids (SCFAs), and that plays a role in the regulation of whole-body energy homeostasis and in intestinal immunity. In omnivorous mammals, the short chain fatty acids acetate, propionate and butyrate are produced primarily by the gut microbiome that metabolizes dietary fibers. SCFAs serve as a source of energy but also act as signaling molecules. That G protein-coupled receptor is probably coupled to the pertussis toxin-sensitive, G(i/o)-alpha family of G proteins. Its activation results in the formation of inositol 1,4,5-trisphosphate, the mobilization of intracellular calcium, the phosphorylation of the MAPK3/ERK1 and MAPK1/ERK2 kinases and the inhibition of intracellular cAMP accumulation. Activated by SCFAs and by beta-hydroxybutyrate, a ketone body produced by the liver upon starvation, it inhibits N-type calcium channels and modulates the activity of sympathetic neurons through a signaling cascade involving the beta and gamma subunits of its coupled G protein, phospholipase C and MAP kinases. Thereby, it may regulate energy expenditure through the control of the sympathetic nervous system that controls for instance heart rate. Upon activation by SCFAs accumulating in the intestine, it may also signal to the brain via neural circuits which in turn would regulate intestinal gluconeogenesis. May also control the production of hormones involved in whole-body energy homeostasis. May for instance, regulate blood pressure through renin secretion. May also regulate secretion of the PYY peptide by enteroendocrine cells and control gut motility, intestinal transit rate, and the harvesting of energy from SCFAs produced by gut microbiota. May also indirectly regulate the production of LEP/Leptin, a hormone acting on the CNS to inhibit food intake, in response to the presence of short-chain fatty acids in the intestine. Finally, may also play a role in glucose homeostasis. Besides its role in energy homeostasis, may play a role in intestinal immunity. May mediate the activation of the inflammatory and immune response by SCFAs in the gut, regulating the rapid production of chemokines and cytokines by intestinal epithelial cells. The protein is Free fatty acid receptor 3 (Ffar3) of Rattus norvegicus (Rat).